The chain runs to 869 residues: MTESEIPKEYNANEVEEKWMEKWNLSMYHFNWGEDPRPQYIIDTPPPYPTGNFHIGNALNWCYIDYIARYKRMRGYNVMFPQGWDCHGLPTEVKVEEIHGITKNQVPRAEFRKMCRELTAGNIEKMRKTMLRLGFSVDWSNEFVTMEPSYFVKTQKSFVRMYNDGHIYHEDHPVNWCPRCETAIAFAEVEYESRQTKLNFVHFDKVDIATTRPELMAACVAVAVNPKDERYSQHIGKEITVPIFGQKVTLIADEAVEPEFGTGAVMICTFGDKQDVRWWVKYGLPLVKALDKQGRMTKAAGKYEGMTLAECREAVIADLKAAGFLYDQKSLEQNVGLCWRCDTPIEILSEPQWFVKINHEGILKAADEIKWYPEYMKVRLQNWTGTMEWDWCISRQRIFATPIPIWYCKKCGEVMIAEESWLPIDPNENTPKKACACGSTEFEPETDVLDTWMDSSITALHVSGWESEHEMRLPTQIRPQGHDIIRTWAFYTILRSLALEGKRPWDSIVINGMVLGPDGHKMSKSLGNVISPEEVTTQYSADAFRQWGAVGGSTGSDVMFRWKDVVSASRFLQKMWSIYRFSMSHLKDFEPADAENFPPDALLTIDRWLLSKLNKLVDTATKELDGYQFDSTFKAIRGFAWEVLADNYLELVKGRLYGEDPEGRKAAQYVLYTTTRTLSLLLAPFIPFFAEEMYSRFSEESVHTQTWPAVNEKLISEEAEAAGEMIKEITGEVRRYKSDLGMALNAPLKKIEIYNAEIDTGDIAGATNSEVELMAGAPSFEYVPVEVKPNMGFLGPRFRKEAGAVVKALQAEDPAAIEAQAASGKITITVNGEAVKLEPEAVEIRKEVISGGREVDVLDVKGAVVVIVR.

Positions 47–57 (PYPTGNFHIGN) match the 'HIGH' region motif. Positions 521-525 (KMSKS) match the 'KMSKS' region motif. ATP is bound at residue K524.

It belongs to the class-I aminoacyl-tRNA synthetase family. ValS type 2 subfamily.

It localises to the cytoplasm. The enzyme catalyses tRNA(Val) + L-valine + ATP = L-valyl-tRNA(Val) + AMP + diphosphate. Functionally, catalyzes the attachment of valine to tRNA(Val). As ValRS can inadvertently accommodate and process structurally similar amino acids such as threonine, to avoid such errors, it has a 'posttransfer' editing activity that hydrolyzes mischarged Thr-tRNA(Val) in a tRNA-dependent manner. In Methanosarcina acetivorans (strain ATCC 35395 / DSM 2834 / JCM 12185 / C2A), this protein is Valine--tRNA ligase.